The chain runs to 454 residues: tRNA-2-methylthio-N(6)-dimethylallyladenosine synthase (454 aa).

An MTTase N-terminal domain is found at R6 to A122. C15, C51, C85, C157, C161, and C164 together coordinate [4Fe-4S] cluster. Residues R143–E380 enclose the Radical SAM core domain. Residues Q383–E447 enclose the TRAM domain.

The protein belongs to the methylthiotransferase family. MiaB subfamily. Monomer. The cofactor is [4Fe-4S] cluster.

It is found in the cytoplasm. It carries out the reaction N(6)-dimethylallyladenosine(37) in tRNA + (sulfur carrier)-SH + AH2 + 2 S-adenosyl-L-methionine = 2-methylsulfanyl-N(6)-dimethylallyladenosine(37) in tRNA + (sulfur carrier)-H + 5'-deoxyadenosine + L-methionine + A + S-adenosyl-L-homocysteine + 2 H(+). Catalyzes the methylthiolation of N6-(dimethylallyl)adenosine (i(6)A), leading to the formation of 2-methylthio-N6-(dimethylallyl)adenosine (ms(2)i(6)A) at position 37 in tRNAs that read codons beginning with uridine. The protein is tRNA-2-methylthio-N(6)-dimethylallyladenosine synthase of Nostoc sp. (strain PCC 7120 / SAG 25.82 / UTEX 2576).